The sequence spans 309 residues: Eugenol synthase 2 (309 aa).

Residues 13–16 (TGYI), 35–45 (VRETTVSDPVK), Arg36, 86–88 (FMQ), 111–113 (SEF), Lys134, and 154–156 (NCF) each bind NADP(+). The Proton donor/acceptor role is filled by Lys134.

This sequence belongs to the NmrA-type oxidoreductase family. In terms of tissue distribution, mostly expressed in petals, and, to a lower extent, in sepals, stamens and pistils.

The enzyme catalyses eugenol + a carboxylate + NADP(+) = a coniferyl ester + NADPH. The catalysed reaction is eugenol + acetate + NADP(+) = (E)-coniferyl acetate + NADPH. It participates in aromatic compound metabolism; phenylpropanoid biosynthesis. Its function is as follows. Catalyzes the synthesis of the phenylpropene eugenol from coniferyl acetate. Phenylpropenes are produced by plants as defense compounds with antimicrobial and antianimal properties, or as floral attractants of pollinators. This Clarkia breweri (Fairy fans) protein is Eugenol synthase 2.